The following is a 448-amino-acid chain: Rhodanese-like domain-containing protein 8, chloroplastic (448 aa).

Residues 1–23 (MRVSPAATLSVSLTTPLPITLTK) constitute a chloroplast transit peptide. Residues 220–323 (SGKSYILLDV…YLKEEGTAEW (104 aa)) form the Rhodanese domain. Cys-283 (cysteine persulfide intermediate) is an active-site residue.

It is found in the plastid. The protein localises to the chloroplast. This Arabidopsis thaliana (Mouse-ear cress) protein is Rhodanese-like domain-containing protein 8, chloroplastic (STR8).